The sequence spans 434 residues: Trigger factor (434 aa).

The 86-residue stretch at 160 to 245 (GDKVKMNFVG…LTEVQAANLP (86 aa)) folds into the PPIase FKBP-type domain.

It belongs to the FKBP-type PPIase family. Tig subfamily.

The protein localises to the cytoplasm. The enzyme catalyses [protein]-peptidylproline (omega=180) = [protein]-peptidylproline (omega=0). In terms of biological role, involved in protein export. Acts as a chaperone by maintaining the newly synthesized protein in an open conformation. Functions as a peptidyl-prolyl cis-trans isomerase. The sequence is that of Trigger factor from Shewanella baltica (strain OS223).